The primary structure comprises 283 residues: Ribonuclease P protein subunit p38 (283 aa).

An N-acetylalanine modification is found at alanine 2. A phosphoserine mark is found at serine 12, serine 226, and serine 235.

This sequence belongs to the eukaryotic ribosomal protein eL8 family. As to quaternary structure, component of nuclear RNase P and RNase MRP ribonucleoproteins. RNase P consists of a catalytic RNA moiety and about 10 protein subunits; POP1, POP4, POP5, POP7, RPP14, RPP21, RPP25, RPP30, RPP38 and RPP40. Within the RNase P complex, POP1, POP7 and RPP25 form the 'finger' subcomplex, POP5, RPP14, RPP40 and homodimeric RPP30 form the 'palm' subcomplex, and RPP21, POP4 and RPP38 form the 'wrist' subcomplex. All subunits of the RNase P complex interact with the catalytic RNA. Several subunits of RNase P are also part of the RNase MRP complex. RNase MRP consists of a catalytic RNA moiety and about 8 protein subunits; POP1, POP7, RPP25, RPP30, RPP38, RPP40 and possibly also POP4 and POP5.

Its subcellular location is the nucleus. The protein localises to the nucleolus. Its function is as follows. Component of ribonuclease P, a ribonucleoprotein complex that generates mature tRNA molecules by cleaving their 5'-ends. Also a component of the MRP ribonuclease complex, which cleaves pre-rRNA sequences. The polypeptide is Ribonuclease P protein subunit p38 (RPP38) (Homo sapiens (Human)).